Consider the following 163-residue polypeptide: NADH-quinone oxidoreductase subunit I (163 aa).

2 4Fe-4S ferredoxin-type domains span residues 54–84 (LRRY…IDSA) and 94–123 (TRYD…ETHI). [4Fe-4S] cluster-binding residues include cysteine 64, cysteine 67, cysteine 70, cysteine 74, cysteine 103, cysteine 106, cysteine 109, and cysteine 113.

It belongs to the complex I 23 kDa subunit family. NDH-1 is composed of 14 different subunits. Subunits NuoA, H, J, K, L, M, N constitute the membrane sector of the complex. The cofactor is [4Fe-4S] cluster.

The protein resides in the cell inner membrane. The catalysed reaction is a quinone + NADH + 5 H(+)(in) = a quinol + NAD(+) + 4 H(+)(out). In terms of biological role, NDH-1 shuttles electrons from NADH, via FMN and iron-sulfur (Fe-S) centers, to quinones in the respiratory chain. The immediate electron acceptor for the enzyme in this species is believed to be ubiquinone. Couples the redox reaction to proton translocation (for every two electrons transferred, four hydrogen ions are translocated across the cytoplasmic membrane), and thus conserves the redox energy in a proton gradient. The polypeptide is NADH-quinone oxidoreductase subunit I (Xanthomonas oryzae pv. oryzae (strain KACC10331 / KXO85)).